Here is a 94-residue protein sequence, read N- to C-terminus: MTKSELMEKLSAKQPTLPAKEIENMVKDILEFISQSLENGDRVEVRGFGSFSLHHRQPRLGRNPKTGDSVNLSAKSVPYFKAGKELKARVDVQA.

It belongs to the bacterial histone-like protein family. Heterodimer of an alpha and a beta chain.

In terms of biological role, this protein is one of the two subunits of integration host factor, a specific DNA-binding protein that functions in genetic recombination as well as in transcriptional and translational control. The polypeptide is Integration host factor subunit beta (Haemophilus influenzae (strain PittGG)).